Here is a 202-residue protein sequence, read N- to C-terminus: MGHYVSLFITSVFIENMALAYFLGMCTFLAVSKKVSTAIGLGVAVVVVMAITVPLNNLLFQFILKDGALAWAGFPDIDLSFLGLLSYIGLIAATVQILEMFLDKFVPSLYNALGVFLPLITVNCAILGGVLFMVERDYNFGESVVYGVGAGFGWALAITALAGIREKLKYSDIPAPLRGLGITFITVGLMSLGFMSFGGMSI.

The next 6 helical transmembrane spans lie at 5–25 (VSLF…FLGM), 35–55 (VSTA…TVPL), 81–101 (FLGL…LEMF), 114–134 (GVFL…LFMV), 144–164 (VVYG…LAGI), and 180–200 (LGIT…FGGM).

This sequence belongs to the NqrDE/RnfAE family. Composed of six subunits; NqrA, NqrB, NqrC, NqrD, NqrE and NqrF.

The protein resides in the cell inner membrane. It catalyses the reaction a ubiquinone + n Na(+)(in) + NADH + H(+) = a ubiquinol + n Na(+)(out) + NAD(+). Its function is as follows. NQR complex catalyzes the reduction of ubiquinone-1 to ubiquinol by two successive reactions, coupled with the transport of Na(+) ions from the cytoplasm to the periplasm. NqrA to NqrE are probably involved in the second step, the conversion of ubisemiquinone to ubiquinol. The protein is Na(+)-translocating NADH-quinone reductase subunit E of Psychrobacter arcticus (strain DSM 17307 / VKM B-2377 / 273-4).